Reading from the N-terminus, the 179-residue chain is Ubiquitin-conjugating enzyme E2 C (179 aa).

A2 carries the post-translational modification N-acetylalanine. S3 carries the post-translational modification Phosphoserine. Positions 30 to 175 (PVGKRLQQEL…LQETYSKQVS (146 aa)) constitute a UBC core domain. Residue C114 is the Glycyl thioester intermediate of the active site.

It belongs to the ubiquitin-conjugating enzyme family. Component of the APC/C complex, composed of at least 14 distinct subunits that assemble into a complex of at least 19 chains with a combined molecular mass of around 1.2 MDa. Within this complex, directly interacts with ANAPC2. Autoubiquitinated by the APC/C complex, leading to its degradation by the proteasome. Its degradation plays a central role in APC/C regulation, allowing cyclin-A accumulation before S phase entry. APC/C substrates inhibit the autoubiquitination of UBE2C/UBCH10 but not its E2 function, hence APC/C remaining active until its substrates have been destroyed.

It catalyses the reaction S-ubiquitinyl-[E1 ubiquitin-activating enzyme]-L-cysteine + [E2 ubiquitin-conjugating enzyme]-L-cysteine = [E1 ubiquitin-activating enzyme]-L-cysteine + S-ubiquitinyl-[E2 ubiquitin-conjugating enzyme]-L-cysteine.. The catalysed reaction is S-ubiquitinyl-[E1 ubiquitin-activating enzyme]-L-cysteine + [acceptor protein]-L-lysine = [E1 ubiquitin-activating enzyme]-L-cysteine + N(6)-monoubiquitinyl-[acceptor protein]-L-lysine.. Its pathway is protein modification; protein ubiquitination. Its function is as follows. Accepts ubiquitin from the E1 complex and catalyzes its covalent attachment to other proteins. In vitro catalyzes 'Lys-11'- and 'Lys-48'-linked polyubiquitination. Acts as an essential factor of the anaphase promoting complex/cyclosome (APC/C), a cell cycle-regulated ubiquitin ligase that controls progression through mitosis. Acts by initiating 'Lys-11'-linked polyubiquitin chains on APC/C substrates, leading to the degradation of APC/C substrates by the proteasome and promoting mitotic exit. This is Ubiquitin-conjugating enzyme E2 C (Ube2c) from Mus musculus (Mouse).